A 355-amino-acid chain; its full sequence is Protein RecA (355 aa).

Gly67–Thr74 contributes to the ATP binding site. The tract at residues Asn335 to Phe355 is disordered. A compositionally biased stretch (acidic residues) spans Val341–Phe355.

This sequence belongs to the RecA family.

The protein resides in the cytoplasm. Can catalyze the hydrolysis of ATP in the presence of single-stranded DNA, the ATP-dependent uptake of single-stranded DNA by duplex DNA, and the ATP-dependent hybridization of homologous single-stranded DNAs. It interacts with LexA causing its activation and leading to its autocatalytic cleavage. The polypeptide is Protein RecA (Sodalis glossinidius).